The sequence spans 102 residues: Putative lipid-transfer protein DIR1 (102 aa).

The signal sequence occupies residues 1 to 25 (MASKKAAMVMMAMIVIMAMLVDTSV). Intrachain disulfides connect Cys-30–Cys-67, Cys-40–Cys-56, Cys-57–Cys-94, and Cys-69–Cys-102. Residue Gln-34 participates in a 1-acyl-sn-glycero-3-phosphocholine binding. Glu-36 contacts Zn(2+). Asn-38 is an a 1-acyl-sn-glycero-3-phosphocholine binding site. His-62 is a Zn(2+) binding site.

This sequence belongs to the A9/FIL1 family. As to quaternary structure, self-interacts and binds to AZI1. Does not interact with PDLP1. Requires Zn(2+) as cofactor.

It localises to the secreted. Its subcellular location is the extracellular space. The protein localises to the apoplast. It is found in the endoplasmic reticulum. The protein resides in the cell junction. It localises to the plasmodesma. Functionally, putative lipid transfer protein required for systemic acquired resistance (SAR) long distance signaling. May interact with a lipid-derived molecule to promote long distance signaling associated with SAR. Together with AZI1, required for glycerol-3-phosphate- (G3P) and azelaic acid- (AA) induced systemic acquired resistance (SAR). Component of plant systemic immunity involved in priming defenses in a AA-dependent manner, by modulating production and/or translocation of a mobile signal(s) during SAR. Is able to bind with high affinity monoacylated phospholipids, mainly lysophosphatidylcholines. The chain is Putative lipid-transfer protein DIR1 (DIR1) from Arabidopsis thaliana (Mouse-ear cress).